A 157-amino-acid chain; its full sequence is Transcription elongation factor GreA (157 aa).

It belongs to the GreA/GreB family.

In terms of biological role, necessary for efficient RNA polymerase transcription elongation past template-encoded arresting sites. The arresting sites in DNA have the property of trapping a certain fraction of elongating RNA polymerases that pass through, resulting in locked ternary complexes. Cleavage of the nascent transcript by cleavage factors such as GreA or GreB allows the resumption of elongation from the new 3'terminus. GreA releases sequences of 2 to 3 nucleotides. The protein is Transcription elongation factor GreA of Chelativorans sp. (strain BNC1).